A 60-amino-acid polypeptide reads, in one-letter code: Hemocyte defensin Cg-Defh2 (60 aa).

Positions Leu-1–Ala-17 are cleaved as a signal peptide. Beta-D-GlcNAc-(1-&gt;4)-Mur2Ac(oyl-L-Ala-gamma-D-Glu-L-Lys-D-Ala-D-Ala)-di-trans,octa-cis-undecaprenyl diphosphate is bound by residues Phe-19, Gly-20, and Cys-21. Cystine bridges form between Cys-21/Cys-42, Cys-28/Cys-51, Cys-32/Cys-53, and Cys-37/Cys-56. The segment at Pro-22–Gln-25 is binds to membrane interface. Residue His-31 coordinates beta-D-GlcNAc-(1-&gt;4)-Mur2Ac(oyl-L-Ala-gamma-D-Glu-L-Lys-D-Ala-D-Ala)-di-trans,octa-cis-undecaprenyl diphosphate. Residues Asp-43–Leu-49 form a binds to membrane interface region. Cys-51 lines the beta-D-GlcNAc-(1-&gt;4)-Mur2Ac(oyl-L-Ala-gamma-D-Glu-L-Lys-D-Ala-D-Ala)-di-trans,octa-cis-undecaprenyl diphosphate pocket.

It belongs to the invertebrate defensin family. As to expression, expressed in hemocytes.

The protein localises to the secreted. It localises to the target cell membrane. Antibacterial peptide mostly active against Gram-positive bacteria. It acts by selectively inhibiting peptidoglycan biosynthesis through complex formation with the cell wall precursor lipid II (1:1 molar ratio) thus inhibiting cell wall synthesis. It does not disrupt cell membranes. Is noticeably more potent than Cg-Defh1. This Magallana gigas (Pacific oyster) protein is Hemocyte defensin Cg-Defh2.